A 155-amino-acid polypeptide reads, in one-letter code: Ribosomal RNA large subunit methyltransferase H (155 aa).

S-adenosyl-L-methionine contacts are provided by residues leucine 72, glycine 104, and 123 to 128 (LSRMTF).

Belongs to the RNA methyltransferase RlmH family. In terms of assembly, homodimer.

The protein localises to the cytoplasm. The catalysed reaction is pseudouridine(1915) in 23S rRNA + S-adenosyl-L-methionine = N(3)-methylpseudouridine(1915) in 23S rRNA + S-adenosyl-L-homocysteine + H(+). Specifically methylates the pseudouridine at position 1915 (m3Psi1915) in 23S rRNA. The chain is Ribosomal RNA large subunit methyltransferase H from Kosmotoga olearia (strain ATCC BAA-1733 / DSM 21960 / TBF 19.5.1).